We begin with the raw amino-acid sequence, 541 residues long: MSRLTDLPAWQALEDHYYELQGTHLRELFAADPERGEKMNAEGAGLYLDYSKHRVTDETLRLLRELAQATGVEARRDAMFRGEKINVTEGRAVLHTALRAPRDAVIEVDGKNVVPEVHEVLDRMATFADAVRSGEWLGYTGKPIKNIVNIGIGGSDLGPVMAYEALKHYAQRDLTVRFVSNVDGTDLTEKTRDLDPEVTLFIVSSKTFTTQETMTNARSARKWLLGSLKDDAAVTRHFVAVSTNAEEVQKFGIDTANMFGFWDWVGGRYSMDSAIGLSLMVAVGPEHFREMLAGFHDMDEHFRTAPAEQNLPMLMGLLGVWYGDFFGAESLAVLPYDQYLASFPAYLQQLDMESNGKHVTLGGEPVDYQTGPIVWGQAGTNGQHAFYQLIHQGTKLIPCDFIGFCQTLNPLPPHHDLLMANVFAQTEALAFGKTLEQVLADGVAPEVAPHRVFEGNRPTSTILADRLTPRTLGALIALYEHKVFVQGAVWDINSFDQWGVELGKVLAKKIDGELQSEGEPELQHDSSTNALIRRYRARRQG.

Glutamate 353 functions as the Proton donor in the catalytic mechanism. Catalysis depends on residues histidine 384 and lysine 504.

It belongs to the GPI family.

Its subcellular location is the cytoplasm. It carries out the reaction alpha-D-glucose 6-phosphate = beta-D-fructose 6-phosphate. Its pathway is carbohydrate biosynthesis; gluconeogenesis. The protein operates within carbohydrate degradation; glycolysis; D-glyceraldehyde 3-phosphate and glycerone phosphate from D-glucose: step 2/4. In terms of biological role, catalyzes the reversible isomerization of glucose-6-phosphate to fructose-6-phosphate. The protein is Glucose-6-phosphate isomerase of Deinococcus radiodurans (strain ATCC 13939 / DSM 20539 / JCM 16871 / CCUG 27074 / LMG 4051 / NBRC 15346 / NCIMB 9279 / VKM B-1422 / R1).